Here is a 372-residue protein sequence, read N- to C-terminus: MQQTFIPVPLPQQPYQIAIASGGLTQLGSWLQDRSLQSVKLGQKVLVVSNPQIWKHYGEIVQDSLAQAGFQVEHFLLPAGERYKTPRSIQKIYDYALDLKLERSSTLVALGGGVIGDMTGFAAATWLRGINFVQVPTSLLAMVDASIGGKTGVNHPKGKNLIGAFYQPRLVLIDPDTLKTLASREFRAGMAEVIKYGVIWDLELFEVLEGCDRTNQYRYMPPHILTEILTRSAQAKADVVTQDEKEAGLRAILNYGHTIGHAIESLTGYRLFNHGEAVALGMVAAADIAVQLDWWSVEDAQRQHQLIQKTGLPTELPADFAIEAVADVLLTDKKVKDGKVRFILPTQLGKIDITDQVPGQVIVSALKGMIGQ.

Residues glycine 113–aspartate 117, threonine 137–serine 138, lysine 150, lysine 159, and threonine 177–threonine 180 each bind NAD(+). The Zn(2+) site is built by glutamate 192, histidine 257, and histidine 274.

It belongs to the sugar phosphate cyclases superfamily. Dehydroquinate synthase family. Requires Co(2+) as cofactor. The cofactor is Zn(2+). It depends on NAD(+) as a cofactor.

Its subcellular location is the cytoplasm. The catalysed reaction is 7-phospho-2-dehydro-3-deoxy-D-arabino-heptonate = 3-dehydroquinate + phosphate. The protein operates within metabolic intermediate biosynthesis; chorismate biosynthesis; chorismate from D-erythrose 4-phosphate and phosphoenolpyruvate: step 2/7. In terms of biological role, catalyzes the conversion of 3-deoxy-D-arabino-heptulosonate 7-phosphate (DAHP) to dehydroquinate (DHQ). The chain is 3-dehydroquinate synthase from Acaryochloris marina (strain MBIC 11017).